Here is a 454-residue protein sequence, read N- to C-terminus: UDP-N-acetylmuramate--L-alanine ligase (454 aa).

Position 113-119 (113-119) interacts with ATP; it reads GSHGKTT.

Belongs to the MurCDEF family.

Its subcellular location is the cytoplasm. It catalyses the reaction UDP-N-acetyl-alpha-D-muramate + L-alanine + ATP = UDP-N-acetyl-alpha-D-muramoyl-L-alanine + ADP + phosphate + H(+). It participates in cell wall biogenesis; peptidoglycan biosynthesis. Functionally, cell wall formation. The polypeptide is UDP-N-acetylmuramate--L-alanine ligase (Aquifex aeolicus (strain VF5)).